The primary structure comprises 208 residues: Proheparin-binding EGF-like growth factor (208 aa).

An N-terminal signal peptide occupies residues 1 to 19; it reads MKLLPSVVLKLLLAAVLSA. A propeptide spanning residues 20–62 is cleaved from the precursor; sequence LVTGESLEQLRRGLAAGTSNPDPSTGSTDQLLRLGGGRDRKVR. Residues 20-160 lie on the Extracellular side of the membrane; that stretch reads LVTGESLEQL…ENRLYTYDHT (141 aa). Residues 34 to 55 are disordered; sequence AAGTSNPDPSTGSTDQLLRLGG. Positions 36–49 are enriched in polar residues; sequence GTSNPDPSTGSTDQ. Thr-75 and Thr-85 each carry an O-linked (GalNAc...) threonine glycan. Positions 81-104 are disordered; the sequence is QALATPSKEEHGKRKKKGKGLGKK. Residues 93–102 show a composition bias toward basic residues; it reads KRKKKGKGLG. Positions 104 to 144 constitute an EGF-like domain; it reads KRDPCLRKYKDFCIHGECKYVKELRAPSCICHPGYHGERCH. Disulfide bonds link Cys-108–Cys-121, Cys-116–Cys-132, and Cys-134–Cys-143. The tract at residues 136–148 is toxin-binding domain; it reads PGYHGERCHGLSL. Positions 149 to 208 are cleaved as a propeptide — C-terminal; it reads PVENRLYTYDHTTILAVVAVVLSSVCLLVIVGLLMFRYHRRGGYDVENEEKVKLGMTNSH. The helical transmembrane segment at 161–184 threads the bilayer; sequence TILAVVAVVLSSVCLLVIVGLLMF. The Cytoplasmic portion of the chain corresponds to 185 to 208; sequence RYHRRGGYDVENEEKVKLGMTNSH.

As to quaternary structure, interacts with EGFR and ERBB4. Interacts with FBLN1. In terms of processing, O-glycosylated.

It localises to the secreted. The protein resides in the extracellular space. It is found in the cell membrane. Its function is as follows. Growth factor that mediates its effects via EGFR, ERBB2 and ERBB4. Required for normal cardiac valve formation and normal heart function. Promotes smooth muscle cell proliferation. May be involved in macrophage-mediated cellular proliferation. It is mitogenic for fibroblasts, but not endothelial cells. It is able to bind EGF receptor/EGFR with higher affinity than EGF itself and is a far more potent mitogen for smooth muscle cells than EGF. Also acts as a diphtheria toxin receptor. The protein is Proheparin-binding EGF-like growth factor (HBEGF) of Chlorocebus aethiops (Green monkey).